The following is a 183-amino-acid chain: Probable chorismate pyruvate-lyase (183 aa).

Residues Arg-79, Leu-115, and Glu-168 each contribute to the substrate site.

This sequence belongs to the UbiC family.

It is found in the cytoplasm. The catalysed reaction is chorismate = 4-hydroxybenzoate + pyruvate. It participates in cofactor biosynthesis; ubiquinone biosynthesis. In terms of biological role, removes the pyruvyl group from chorismate, with concomitant aromatization of the ring, to provide 4-hydroxybenzoate (4HB) for the ubiquinone pathway. The sequence is that of Probable chorismate pyruvate-lyase from Chromohalobacter salexigens (strain ATCC BAA-138 / DSM 3043 / CIP 106854 / NCIMB 13768 / 1H11).